Reading from the N-terminus, the 123-residue chain is Large ribosomal subunit protein eL8 (123 aa).

The protein belongs to the eukaryotic ribosomal protein eL8 family. Part of the 50S ribosomal subunit. Probably part of the RNase P complex.

The protein resides in the cytoplasm. Multifunctional RNA-binding protein that recognizes the K-turn motif in ribosomal RNA, the RNA component of RNase P, box H/ACA, box C/D and box C'/D' sRNAs. In Methanosphaera stadtmanae (strain ATCC 43021 / DSM 3091 / JCM 11832 / MCB-3), this protein is Large ribosomal subunit protein eL8.